The sequence spans 1219 residues: A disintegrin and metalloproteinase with thrombospondin motifs 18 (1219 aa).

The first 47 residues, 1–47 (MECALLCLCALRAAGPGPPWGPAGLGRLAKALQLCCFCCASVAVALA), serve as a signal peptide directing secretion. Residues 48–284 (SDSGSSGGSG…EYGGTGRPRR (237 aa)) constitute a propeptide that is removed on maturation. N-linked (GlcNAc...) asparagine glycosylation is found at asparagine 151 and asparagine 190. The segment at 217 to 248 (YPGSQRTYPGHSPSHTPPASQSQEPEYSHRRW) is disordered. Residues 218–241 (PGSQRTYPGHSPSHTPPASQSQEP) are compositionally biased toward polar residues. The region spanning 293–498 (LNVETLVVAD…PQAGCLVDEP (206 aa)) is the Peptidase M12B domain. 11 disulfide bridges follow: cysteine 369–cysteine 420, cysteine 395–cysteine 402, cysteine 414–cysteine 493, cysteine 453–cysteine 477, cysteine 521–cysteine 546, cysteine 532–cysteine 553, cysteine 541–cysteine 572, cysteine 566–cysteine 577, cysteine 601–cysteine 638, cysteine 605–cysteine 643, and cysteine 616–cysteine 628. Position 436 (histidine 436) interacts with Zn(2+). Glutamate 437 is a catalytic residue. Histidine 440 and histidine 446 together coordinate Zn(2+). A TSP type-1 1 domain is found at 589–644 (HGQWSAWSKWSECSRTCGGGVKFQERHCSNPKPQYGGKYCPGSSRIYKLCNINPCP). Residues asparagine 745, asparagine 838, asparagine 865, and asparagine 909 are each glycosylated (N-linked (GlcNAc...) asparagine). 4 consecutive TSP type-1 domains span residues 931-990 (CPAY…NSHA), 991-1049 (CPPE…GRCP), 1052-1116 (NRLQ…RTCP), and 1121-1176 (AVAS…NFCP). The PLAC domain maps to 1182–1219 (DDPSCVDFFSWCHLVPQHGVCNHKFYGKQCCRSCTRKS).

Zn(2+) is required as a cofactor. The precursor is cleaved by a furin endopeptidase. Post-translationally, glycosylated. Can be O-fucosylated by POFUT2 on a serine or a threonine residue found within the consensus sequence C1-X(2)-(S/T)-C2-G of the TSP type-1 repeat domains where C1 and C2 are the first and second cysteine residue of the repeat, respectively. Fucosylated repeats can then be further glycosylated by the addition of a beta-1,3-glucose residue by the glucosyltransferase, B3GALTL. Fucosylation mediates the efficient secretion of ADAMTS family members. Can also be C-glycosylated with one or two mannose molecules on tryptophan residues within the consensus sequence W-X-X-W of the TPRs, and N-glycosylated. These other glycosylations can also facilitate secretion.

The protein localises to the secreted. It is found in the extracellular space. It localises to the extracellular matrix. This Mus musculus (Mouse) protein is A disintegrin and metalloproteinase with thrombospondin motifs 18 (Adamts18).